The sequence spans 265 residues: uncharacterized protein (265 aa).

This is an uncharacterized protein from Autographa californica nuclear polyhedrosis virus (AcMNPV).